Reading from the N-terminus, the 730-residue chain is Polyphosphate kinase (730 aa).

Positions 1 to 21 are enriched in basic and acidic residues; it reads MMRHDRNVTEIDAETRPDENL. Residues 1-39 form a disordered region; it reads MMRHDRNVTEIDAETRPDENLWHSGDSAVGAPPAATPAA. N86 provides a ligand contact to ATP. Mg(2+) contacts are provided by R423 and R453. Residue H483 is the Phosphohistidine intermediate of the active site. Y516, R612, and H640 together coordinate ATP.

This sequence belongs to the polyphosphate kinase 1 (PPK1) family. It depends on Mg(2+) as a cofactor. An intermediate of this reaction is the autophosphorylated ppk in which a phosphate is covalently linked to a histidine residue through a N-P bond.

The catalysed reaction is [phosphate](n) + ATP = [phosphate](n+1) + ADP. Functionally, catalyzes the reversible transfer of the terminal phosphate of ATP to form a long-chain polyphosphate (polyP). The sequence is that of Polyphosphate kinase from Mycobacterium avium (strain 104).